Here is a 148-residue protein sequence, read N- to C-terminus: uncharacterized protein (148 aa).

This is an uncharacterized protein from Bacillus subtilis (strain 168).